The primary structure comprises 681 residues: Angiomotin-like 2b (681 aa).

Low complexity predominate over residues 68 to 84 (GGGAASSSQSSSESLSQ). Positions 68–106 (GGGAASSSQSSSESLSQDEPHSPQLSTRQEPQGQEHQVD) are disordered. The span at 90–102 (PQLSTRQEPQGQE) shows a compositional bias: polar residues. Residue Tyr126 is modified to Phosphotyrosine; by FGFR1. 3 coiled-coil regions span residues 268–319 (NACS…LMKG), 362–441 (IEKL…LQAT), and 481–508 (VYTL…WEQK). The interval 589-618 (QLGALQPATADSSIISSHSTPAHTAQGKER) is disordered. Residues 597 to 611 (TADSSIISSHSTPAH) show a composition bias toward polar residues. Residues 678-681 (EIFI) carry the PDZ-binding motif.

The protein belongs to the angiomotin family. In terms of assembly, interacts with SRC. Phosphorylation at Tyr-126 is necessary for efficient binding to SRC and synergistically functioning with SRC to activate the downstream MAPK pathway. Expressed in endothelial cells.

Its subcellular location is the recycling endosome. The protein localises to the cytoplasm. It is found in the cell projection. It localises to the podosome. The protein resides in the cell junction. Its function is as follows. Required for proper architecture of actin filaments and for cell movements during embryogenesis. Plays a role in the radial actin fiber architecture in skin epithelial cells, thereby maintains cell geometry, size and cell interconnectivity within the skin. Plays an important role in coupling actin fibers to cell junctions in endothelial cells and is therefore required for correct endothelial cell morphology and maintenance of dorsal aorta lumen expansion during embryogenesis. May further play a role in the polarity, proliferation and migration of endothelial cells, and therefore participates in angiogenesis. May regulate the translocation of phosphorylated SRC to peripheral cell-matrix adhesion sites. In Danio rerio (Zebrafish), this protein is Angiomotin-like 2b.